The following is a 150-amino-acid chain: UPF0178 protein HCH_06960 (150 aa).

The protein belongs to the UPF0178 family.

This chain is UPF0178 protein HCH_06960, found in Hahella chejuensis (strain KCTC 2396).